We begin with the raw amino-acid sequence, 265 residues long: Small ribosomal subunit protein uS2 (265 aa).

It belongs to the universal ribosomal protein uS2 family.

This is Small ribosomal subunit protein uS2 from Ligilactobacillus salivarius (strain UCC118) (Lactobacillus salivarius).